The primary structure comprises 493 residues: Protein nucleotidyltransferase YdiU (493 aa).

ATP contacts are provided by glycine 81, glycine 83, arginine 84, lysine 103, aspartate 115, glycine 116, arginine 166, and arginine 173. Aspartate 244 (proton acceptor) is an active-site residue. 2 residues coordinate Mg(2+): asparagine 245 and aspartate 254. Residue aspartate 254 participates in ATP binding.

It belongs to the SELO family. Mg(2+) is required as a cofactor. Requires Mn(2+) as cofactor.

It carries out the reaction L-seryl-[protein] + ATP = 3-O-(5'-adenylyl)-L-seryl-[protein] + diphosphate. It catalyses the reaction L-threonyl-[protein] + ATP = 3-O-(5'-adenylyl)-L-threonyl-[protein] + diphosphate. The catalysed reaction is L-tyrosyl-[protein] + ATP = O-(5'-adenylyl)-L-tyrosyl-[protein] + diphosphate. The enzyme catalyses L-histidyl-[protein] + UTP = N(tele)-(5'-uridylyl)-L-histidyl-[protein] + diphosphate. It carries out the reaction L-seryl-[protein] + UTP = O-(5'-uridylyl)-L-seryl-[protein] + diphosphate. It catalyses the reaction L-tyrosyl-[protein] + UTP = O-(5'-uridylyl)-L-tyrosyl-[protein] + diphosphate. Its function is as follows. Nucleotidyltransferase involved in the post-translational modification of proteins. It can catalyze the addition of adenosine monophosphate (AMP) or uridine monophosphate (UMP) to a protein, resulting in modifications known as AMPylation and UMPylation. This Shewanella frigidimarina (strain NCIMB 400) protein is Protein nucleotidyltransferase YdiU.